A 387-amino-acid chain; its full sequence is Exodeoxyribonuclease 7 large subunit (387 aa).

Belongs to the XseA family. Heterooligomer composed of large and small subunits.

It is found in the cytoplasm. The enzyme catalyses Exonucleolytic cleavage in either 5'- to 3'- or 3'- to 5'-direction to yield nucleoside 5'-phosphates.. Functionally, bidirectionally degrades single-stranded DNA into large acid-insoluble oligonucleotides, which are then degraded further into small acid-soluble oligonucleotides. This is Exodeoxyribonuclease 7 large subunit from Synechococcus sp. (strain CC9902).